Consider the following 933-residue polypeptide: Dual 3',5'-cyclic-AMP and -GMP phosphodiesterase 11A (933 aa).

Positions 42-121 (HTSGQGASSL…LQRRASQKEL (80 aa)) are disordered. Residues serine 162, serine 163, and serine 239 each carry the phosphoserine modification. 2 GAF domains span residues 217–370 (DLTS…GIAI) and 402–558 (DLEK…GLGI). Position 424 (serine 424) interacts with 3',5'-cyclic GMP. The 325-residue stretch at 588–912 (SKAEVDKFKA…RKWEELHQKR (325 aa)) folds into the PDEase domain. The active-site Proton donor is histidine 664. Residues histidine 668, histidine 704, aspartate 705, and aspartate 816 each coordinate a divalent metal cation. The segment at 913-933 (LQVSAASPDPASPMVAGEDRL) is disordered.

It belongs to the cyclic nucleotide phosphodiesterase family. It depends on a divalent metal cation as a cofactor. Expressed in testis and developing spermatoza.

The protein resides in the cytoplasm. It localises to the cytosol. It catalyses the reaction 3',5'-cyclic GMP + H2O = GMP + H(+). The enzyme catalyses 3',5'-cyclic AMP + H2O = AMP + H(+). Inhibited by 3-isobutyl-1-methylxanthine (IBMX), zaprinast and dipyridamole. cGMP acts as an allosteric activator. Plays a role in signal transduction by regulating the intracellular concentration of cyclic nucleotides cAMP and cGMP. Catalyzes the hydrolysis of both cAMP and cGMP to 5'-AMP and 5'-GMP, respectively. This is Dual 3',5'-cyclic-AMP and -GMP phosphodiesterase 11A (Pde11a) from Mus musculus (Mouse).